The chain runs to 199 residues: MSSGNAKIGHPAPNFKATAVMPDGQFKDISLSDYKGKYVVFFFYPLDFTFVCPTEIIAFSDRAEEFKKLNCQVIGASVDSHFCHLAWVNTPKKQGGLGPMNIPLVSDPKRTIAQDYGVLKADEGISFRGLFIIDDKGILRQITVNDLPVGRSVDETLRLVQAFQFTDKHGEVCPAGWKPGSDTIKPDVQKSKEYFSKQK.

An N-acetylserine modification is found at Ser-2. The Thioredoxin domain occupies 6-165 (AKIGHPAPNF…TLRLVQAFQF (160 aa)). An N6-acetyllysine; alternate modification is found at Lys-7. Lys-7 participates in a covalent cross-link: Glycyl lysine isopeptide (Lys-Gly) (interchain with G-Cter in SUMO2); alternate. 2 positions are modified to N6-acetyllysine: Lys-16 and Lys-27. The residue at position 32 (Ser-32) is a Phosphoserine. Lys-35 bears the N6-acetyllysine; alternate mark. Lys-35 carries the post-translational modification N6-succinyllysine; alternate. Cys-52 serves as the catalytic Cysteine sulfenic acid (-SOH) intermediate. A Phosphothreonine; by CDK1 modification is found at Thr-90. A Glycyl lysine isopeptide (Lys-Gly) (interchain with G-Cter in SUMO2) cross-link involves residue Lys-120. N6-acetyllysine is present on Lys-136. Positions 176–199 (GWKPGSDTIKPDVQKSKEYFSKQK) are disordered. Over residues 184–199 (IKPDVQKSKEYFSKQK) the composition is skewed to basic and acidic residues. Residue Lys-185 forms a Glycyl lysine isopeptide (Lys-Gly) (interchain with G-Cter in SUMO1) linkage. Residue Lys-197 is modified to N6-acetyllysine.

It belongs to the peroxiredoxin family. AhpC/Prx1 subfamily. Homodimer; disulfide-linked, upon oxidation. 5 homodimers assemble to form a ring-like decamer. Interacts with GDPD5; forms a mixed-disulfide with GDPD5. Interacts with SESN1 and SESN2. Interacts with FAM107A. In terms of processing, phosphorylated on Thr-90 during the M-phase, which leads to a more than 80% decrease in enzymatic activity. Post-translationally, acetylation increases reducing activity and resistance to superoxidation. Deacetylated by HDAC6 which decreases reducing activity. The enzyme can be inactivated by further oxidation of the cysteine sulfenic acid (C(P)-SOH) to sulphinic acid (C(P)-SO2H) instead of its condensation to a disulfide bond. It can be reactivated by forming a transient disulfide bond with sulfiredoxin SRXN1, which reduces the cysteine sulfinic acid in an ATP- and Mg-dependent manner.

The protein resides in the cytoplasm. It localises to the melanosome. It carries out the reaction a hydroperoxide + [thioredoxin]-dithiol = an alcohol + [thioredoxin]-disulfide + H2O. Its function is as follows. Thiol-specific peroxidase that catalyzes the reduction of hydrogen peroxide and organic hydroperoxides to water and alcohols, respectively. Plays a role in cell protection against oxidative stress by detoxifying peroxides and as sensor of hydrogen peroxide-mediated signaling events. Might participate in the signaling cascades of growth factors and tumor necrosis factor-alpha by regulating the intracellular concentrations of H(2)O(2). Reduces an intramolecular disulfide bond in GDPD5 that gates the ability to GDPD5 to drive postmitotic motor neuron differentiation. The polypeptide is Peroxiredoxin-1 (PRDX1) (Homo sapiens (Human)).